The primary structure comprises 515 residues: 2,3-bisphosphoglycerate-independent phosphoglycerate mutase 1 (515 aa).

Residues Asp14 and Ser64 each contribute to the Mn(2+) site. The active-site Phosphoserine intermediate is Ser64. Substrate contacts are provided by residues His125, 155-156 (RD), Arg187, Arg193, 264-267 (RADR), and Lys337. The Mn(2+) site is built by Asp404, His408, Asp445, His446, and His464.

The protein belongs to the BPG-independent phosphoglycerate mutase family. Mn(2+) is required as a cofactor.

It catalyses the reaction (2R)-2-phosphoglycerate = (2R)-3-phosphoglycerate. It functions in the pathway carbohydrate degradation; glycolysis; pyruvate from D-glyceraldehyde 3-phosphate: step 3/5. Functionally, catalyzes the interconversion of 2-phosphoglycerate and 3-phosphoglycerate. This Methanosarcina acetivorans (strain ATCC 35395 / DSM 2834 / JCM 12185 / C2A) protein is 2,3-bisphosphoglycerate-independent phosphoglycerate mutase 1.